We begin with the raw amino-acid sequence, 245 residues long: 2,3-bisphosphoglycerate-dependent phosphoglycerate mutase (245 aa).

Substrate is bound by residues 8 to 15, 21 to 22, Arg-60, 87 to 90, Lys-98, 114 to 115, and 183 to 184; these read RHGQSLWN, TG, ERHY, RR, and GN. His-9 functions as the Tele-phosphohistidine intermediate in the catalytic mechanism. The active-site Proton donor/acceptor is the Glu-87.

It belongs to the phosphoglycerate mutase family. BPG-dependent PGAM subfamily.

The enzyme catalyses (2R)-2-phosphoglycerate = (2R)-3-phosphoglycerate. It participates in carbohydrate degradation; glycolysis; pyruvate from D-glyceraldehyde 3-phosphate: step 3/5. In terms of biological role, catalyzes the interconversion of 2-phosphoglycerate and 3-phosphoglycerate. The protein is 2,3-bisphosphoglycerate-dependent phosphoglycerate mutase of Bacillus cereus (strain G9842).